A 168-amino-acid polypeptide reads, in one-letter code: G/U mismatch-specific DNA glycosylase (168 aa).

The protein belongs to the uracil-DNA glycosylase (UDG) superfamily. TDG/mug family. Binds DNA as a monomer.

Its subcellular location is the cytoplasm. It catalyses the reaction Specifically hydrolyzes mismatched double-stranded DNA and polynucleotides, releasing free uracil.. Functionally, excises ethenocytosine and uracil, which can arise by alkylation or deamination of cytosine, respectively, from the corresponding mispairs with guanine in ds-DNA. It is capable of hydrolyzing the carbon-nitrogen bond between the sugar-phosphate backbone of the DNA and the mispaired base. The complementary strand guanine functions in substrate recognition. Required for DNA damage lesion repair in stationary-phase cells. The sequence is that of G/U mismatch-specific DNA glycosylase from Salmonella dublin (strain CT_02021853).